We begin with the raw amino-acid sequence, 348 residues long: Short-chain dehydrogenase fogG (348 aa).

NADP(+)-binding residues include leucine 51, arginine 75, aspartate 100, and asparagine 126. Active-site proton donor residues include serine 180 and tyrosine 215. Positions 215 and 219 each coordinate NADP(+). Residue lysine 219 is the Lowers pKa of active site Tyr of the active site.

Belongs to the short-chain dehydrogenases/reductases (SDR) family.

The protein operates within secondary metabolite biosynthesis. Its function is as follows. Short-chain dehydrogenase; part of the gene cluster that mediates the biosynthesis of flavoglaucin and congeners (including aspergin, dihydroauroglaucin and auroglaucin), prenylated salicylaldehyde derivatives carrying a saturated or an unsaturated C-7 side chain. The PKS fogA releases the carboxylic acid (8E,10E,12E)-3,5,7-trihydroxytetradeca-8,10,12-trienoic acid as its product, as well as derivatives with one and two double bonds. FogA is indeed able to reduce the initial triketide, thus being at least partially responsible for the differently saturated heptyl side chains of flavoglaucin congeners. The oxidoreductases fogB, fogC and fogD modify the nascent polyketide in fogA-bound form and, together, fogA, fogB, fogC and fogD are necessary for the formation of the aromatic core and the cyclized PKS products are released as salicyl alcohols. In particular, fogB is responsible for oxidation of a hydroxyl group or reduction of remaining double bond(s) at the C-7 residue whereas fogD is probably involved in the reductive release of the modified PKS products. The cytochrome P450 monooxygenase fogE is then responsible for the hydroxylation at C-3 of the benzene ring. The fogE products are substrates of the prenyltransferase fogH and the prenylated benzyl alcohols are subsequently oxidized by the fogF to produce the final aryl aldehydes flavoglaucin and congeners. The short-chain dehydrogenase fogG does not seem to be involved in the biosynthesis of the prenylated salicylaldehyde derivatives. This Aspergillus ruber (strain CBS 135680) protein is Short-chain dehydrogenase fogG.